Here is a 60-residue protein sequence, read N- to C-terminus: DGYIKGYKGCKITCVINDDYCDTECKAEGGTYGYCWKWGLACWCEDLPDEKRWKSETNTC.

One can recognise an LCN-type CS-alpha/beta domain in the interval 1–60 (DGYIKGYKGCKITCVINDDYCDTECKAEGGTYGYCWKWGLACWCEDLPDEKRWKSETNTC). 4 cysteine pairs are disulfide-bonded: cysteine 10-cysteine 60, cysteine 14-cysteine 35, cysteine 21-cysteine 42, and cysteine 25-cysteine 44.

It belongs to the long (4 C-C) scorpion toxin superfamily. Sodium channel inhibitor family. Beta subfamily. In terms of tissue distribution, expressed by the venom gland.

It is found in the secreted. In terms of biological role, beta toxins bind voltage-independently at site-4 of sodium channels (Nav) and shift the voltage of activation toward more negative potentials thereby affecting sodium channel activation and promoting spontaneous and repetitive firing. This toxin specifically acts by inducing a new current with very slow activation/deactivation kinetics due to the transformation of normal fast channels into slow ones. It possess properties of excitatory and depressant toxins. It is highly active on insects and less active on mammals. In Buthus occitanus tunetanus (Common European scorpion), this protein is Beta-toxin BotIT2.